Consider the following 277-residue polypeptide: Putative phosphoenolpyruvate synthase regulatory protein (277 aa).

Residue 157–164 (GVSRCGKT) participates in ADP binding.

It belongs to the pyruvate, phosphate/water dikinase regulatory protein family. PSRP subfamily.

The catalysed reaction is [pyruvate, water dikinase] + ADP = [pyruvate, water dikinase]-phosphate + AMP + H(+). It catalyses the reaction [pyruvate, water dikinase]-phosphate + phosphate + H(+) = [pyruvate, water dikinase] + diphosphate. Its function is as follows. Bifunctional serine/threonine kinase and phosphorylase involved in the regulation of the phosphoenolpyruvate synthase (PEPS) by catalyzing its phosphorylation/dephosphorylation. The sequence is that of Putative phosphoenolpyruvate synthase regulatory protein from Klebsiella pneumoniae subsp. pneumoniae (strain ATCC 700721 / MGH 78578).